The primary structure comprises 139 residues: D-ribose pyranase (139 aa).

The active-site Proton donor is the H20. Substrate-binding positions include D28, H106, and 128–130 (YAN).

This sequence belongs to the RbsD / FucU family. RbsD subfamily. In terms of assembly, homodecamer.

It localises to the cytoplasm. It carries out the reaction beta-D-ribopyranose = beta-D-ribofuranose. Its pathway is carbohydrate metabolism; D-ribose degradation; D-ribose 5-phosphate from beta-D-ribopyranose: step 1/2. Its function is as follows. Catalyzes the interconversion of beta-pyran and beta-furan forms of D-ribose. This is D-ribose pyranase from Aliivibrio fischeri (strain ATCC 700601 / ES114) (Vibrio fischeri).